Reading from the N-terminus, the 44-residue chain is APEDSQSHQVSLSKQPASQAGGDPTGPKESKKKVESETETDPVP.

A disordered region spans residues 1–44; the sequence is APEDSQSHQVSLSKQPASQAGGDPTGPKESKKKVESETETDPVP. The segment covering 7–18 has biased composition (polar residues); it reads SHQVSLSKQPAS. Residue Lys14 forms a Glycyl lysine isopeptide (Lys-Gly) (interchain with G-Cter in ubiquitin) linkage. The Cell attachment site signature appears at 21-23; sequence GGD. Positions 26-36 are enriched in basic and acidic residues; it reads GPKESKKKVES.

It belongs to the lentiviruses Tat family. As to quaternary structure, interacts with host CCNT1. Associates with the P-TEFb complex composed at least of Tat, P-TEFb (CDK9 and CCNT1), TAR RNA, RNA Pol II. Recruits the HATs CREBBP, TAF1/TFIID, EP300, PCAF and GCN5L2. Interacts with host KAT5/Tip60; this interaction targets the latter to degradation. Interacts with the host deacetylase SIRT1. Interacts with host capping enzyme RNGTT; this interaction stimulates RNGTT. Binds to host KDR, and to the host integrins ITGAV/ITGB3 and ITGA5/ITGB1. Interacts with host KPNB1/importin beta-1 without previous binding to KPNA1/importin alpha-1. Interacts with EIF2AK2. Interacts with host nucleosome assembly protein NAP1L1; this interaction may be required for the transport of Tat within the nucleus, since the two proteins interact at the nuclear rim. Interacts with host C1QBP/SF2P32; this interaction involves lysine-acetylated Tat. Interacts with the host chemokine receptors CCR2, CCR3 and CXCR4. Interacts with host DPP4/CD26; this interaction may trigger an anti-proliferative effect. Interacts with host LDLR. Interacts with the host extracellular matrix metalloproteinase MMP1. Interacts with host PRMT6; this interaction mediates Tat's methylation. Interacts with, and is ubiquitinated by MDM2/Hdm2. Interacts with host PSMC3 and HTATIP2. Interacts with STAB1; this interaction may overcome SATB1-mediated repression of IL2 and IL2RA (interleukin) in T cells by binding to the same domain than HDAC1. Interacts (when acetylated) with human CDK13, thereby increasing HIV-1 mRNA splicing and promoting the production of the doubly spliced HIV-1 protein Nef. Post-translationally, acetylation by EP300, CREBBP, GCN5L2/GCN5 and PCAF regulates the transactivation activity of Tat. Phosphorylated by EIF2AK2 on serine and threonine residues adjacent to the basic region important for TAR RNA binding and function. Phosphorylation of Tat by EIF2AK2 is dependent on the prior activation of EIF2AK2 by dsRNA. In terms of processing, asymmetrical arginine methylation by host PRMT6 seems to diminish the transactivation capacity of Tat and affects the interaction with host CCNT1. Post-translationally, polyubiquitination by MDM2 does not target Tat to degradation, but activates its transactivation function and fosters interaction with CCNT1 and TAR RNA.

The protein localises to the host nucleus. It localises to the host nucleolus. Its subcellular location is the host cytoplasm. It is found in the secreted. In terms of biological role, transcriptional activator that increases RNA Pol II processivity, thereby increasing the level of full-length viral transcripts. Recognizes a hairpin structure at the 5'-LTR of the nascent viral mRNAs referred to as the transactivation responsive RNA element (TAR) and recruits the cyclin T1-CDK9 complex (P-TEFb complex) that will in turn hyperphosphorylate the RNA polymerase II to allow efficient elongation. The CDK9 component of P-TEFb and other Tat-activated kinases hyperphosphorylate the C-terminus of RNA Pol II that becomes stabilized and much more processive. Other factors such as HTATSF1/Tat-SF1, SUPT5H/SPT5, and HTATIP2 are also important for Tat's function. Besides its effect on RNA Pol II processivity, Tat induces chromatin remodeling of proviral genes by recruiting the histone acetyltransferases (HATs) CREBBP, EP300 and PCAF to the chromatin. This also contributes to the increase in proviral transcription rate, especially when the provirus integrates in transcriptionally silent region of the host genome. To ensure maximal activation of the LTR, Tat mediates nuclear translocation of NF-kappa-B by interacting with host RELA. Through its interaction with host TBP, Tat may also modulate transcription initiation. Tat can reactivate a latently infected cell by penetrating in it and transactivating its LTR promoter. In the cytoplasm, Tat is thought to act as a translational activator of HIV-1 mRNAs. Functionally, extracellular circulating Tat can be endocytosed by surrounding uninfected cells via the binding to several surface receptors such as CD26, CXCR4, heparan sulfate proteoglycans (HSPG) or LDLR. Neurons are rarely infected, but they internalize Tat via their LDLR. Endosomal low pH allows Tat to cross the endosome membrane to enter the cytosol and eventually further translocate into the nucleus, thereby inducing severe cell dysfunctions ranging from cell activation to cell death. Through its interaction with nuclear HATs, Tat is potentially able to control the acetylation-dependent cellular gene expression. Tat seems to inhibit the HAT activity of KAT5/Tip60 and TAF1, and consequently modify the expression of specific cellular genes. Modulates the expression of many cellular genes involved in cell survival, proliferation or in coding for cytokines (such as IL10) or cytokine receptors. May be involved in the derepression of host interleukin IL2 expression. Mediates the activation of cyclin-dependent kinases and dysregulation of microtubule network. Tat plays a role in T-cell and neurons apoptosis. Tat induced neurotoxicity and apoptosis probably contribute to neuroAIDS. Host extracellular matrix metalloproteinase MMP1 cleaves Tat and decreases Tat's mediated neurotoxicity. Circulating Tat also acts as a chemokine-like and/or growth factor-like molecule that binds to specific receptors on the surface of the cells, affecting many cellular pathways. In the vascular system, Tat binds to ITGAV/ITGB3 and ITGA5/ITGB1 integrins dimers at the surface of endothelial cells and competes with bFGF for heparin-binding sites, leading to an excess of soluble bFGF. Binds to KDR/VEGFR-2. All these Tat-mediated effects enhance angiogenesis in Kaposi's sarcoma lesions. In Human immunodeficiency virus type 1 group M subtype B (isolate BRVA) (HIV-1), this protein is Protein Tat.